Reading from the N-terminus, the 344-residue chain is Uroporphyrinogen decarboxylase (344 aa).

Substrate contacts are provided by residues 26-30 (RQAGR), Phe45, Asp75, Tyr151, Ser206, and His320.

The protein belongs to the uroporphyrinogen decarboxylase family. In terms of assembly, homodimer.

It is found in the cytoplasm. The catalysed reaction is uroporphyrinogen III + 4 H(+) = coproporphyrinogen III + 4 CO2. Its pathway is porphyrin-containing compound metabolism; protoporphyrin-IX biosynthesis; coproporphyrinogen-III from 5-aminolevulinate: step 4/4. In terms of biological role, catalyzes the decarboxylation of four acetate groups of uroporphyrinogen-III to yield coproporphyrinogen-III. This is Uroporphyrinogen decarboxylase from Staphylococcus epidermidis (strain ATCC 35984 / DSM 28319 / BCRC 17069 / CCUG 31568 / BM 3577 / RP62A).